The chain runs to 418 residues: UDP-N-acetyl-D-mannosamine dehydrogenase (418 aa).

The NAD(+) site is built by Y10, I11, D30, T85, and T119. UDP-N-acetyl-alpha-D-mannosaminouronate is bound by residues R152, V153, K204, N208, R211, H242, R244, T249, and G255. The active-site Proton donor/acceptor is the K204. C258 (nucleophile) is an active-site residue. K261 provides a ligand contact to NAD(+). UDP-N-acetyl-alpha-D-mannosaminouronate-binding residues include Y318 and K319. R326 contributes to the NAD(+) binding site. UDP-N-acetyl-alpha-D-mannosaminouronate is bound at residue R398.

The protein belongs to the UDP-glucose/GDP-mannose dehydrogenase family. Homodimer.

The enzyme catalyses UDP-N-acetyl-alpha-D-mannosamine + 2 NAD(+) + H2O = UDP-N-acetyl-alpha-D-mannosaminouronate + 2 NADH + 3 H(+). Functionally, catalyzes the four-electron oxidation of UDP-N-acetyl-D-mannosamine (UDP-ManNAc), reducing NAD(+) and releasing UDP-N-acetylmannosaminuronic acid (UDP-ManNAcA). The chain is UDP-N-acetyl-D-mannosamine dehydrogenase from Pyrococcus horikoshii (strain ATCC 700860 / DSM 12428 / JCM 9974 / NBRC 100139 / OT-3).